A 288-amino-acid chain; its full sequence is Leucine-rich repeat-containing protein 72 (288 aa).

4 LRR repeats span residues 47-68 (DVFE…SRFK), 69-90 (KLKY…TRNY), 91-112 (CLAE…HYLP), and 113-134 (SLHI…VKEL). The 39-residue stretch at 148–186 (NPLCQYNLYRLYIIYHLPGVELLDRNQVTEKERRSMITL) folds into the LRRCT domain.

This chain is Leucine-rich repeat-containing protein 72 (LRRC72), found in Bos taurus (Bovine).